The primary structure comprises 897 residues: Protein transport protein SEC24-1 (897 aa).

Residues Cys-213, Cys-216, Cys-235, and Cys-238 each contribute to the Zn(2+) site. Positions 213–238 are zinc finger-like; the sequence is CRRCRSYINPFAKFIEQGRRWRCNFC.

It belongs to the SEC23/SEC24 family. SEC24 subfamily. The COPII coat is composed of at least 5 proteins: the SEC23/24 complex, the SEC13/31 complex, and the protein SAR1. Golgi apparatus membrane; Peripheral membrane protein; Cytoplasmic side.

The protein localises to the cytoplasm. The protein resides in the cytoplasmic vesicle. It localises to the COPII-coated vesicle membrane. It is found in the endoplasmic reticulum membrane. Its subcellular location is the golgi apparatus membrane. Component of the coat protein complex II (COPII) which promotes the formation of transport vesicles from the endoplasmic reticulum (ER). The coat has two main functions, the physical deformation of the endoplasmic reticulum membrane into vesicles and the selection of cargo molecules. The protein is Protein transport protein SEC24-1 (SEC241) of Candida glabrata (strain ATCC 2001 / BCRC 20586 / JCM 3761 / NBRC 0622 / NRRL Y-65 / CBS 138) (Yeast).